We begin with the raw amino-acid sequence, 448 residues long: SET domain-containing protein SmydA-8, isoform B (448 aa).

One can recognise an SET domain in the interval Pro-42–Ala-273.

Belongs to the class V-like SAM-binding methyltransferase superfamily.

The polypeptide is SET domain-containing protein SmydA-8, isoform B (Drosophila melanogaster (Fruit fly)).